The primary structure comprises 616 residues: Dihydroxy-acid dehydratase (616 aa).

Asp-81 serves as a coordination point for Mg(2+). Residue Cys-122 participates in [2Fe-2S] cluster binding. 2 residues coordinate Mg(2+): Asp-123 and Lys-124. An N6-carboxylysine modification is found at Lys-124. Cys-195 is a [2Fe-2S] cluster binding site. Glu-491 contacts Mg(2+). The active-site Proton acceptor is Ser-517.

The protein belongs to the IlvD/Edd family. Homodimer. It depends on [2Fe-2S] cluster as a cofactor. Requires Mg(2+) as cofactor.

It catalyses the reaction (2R)-2,3-dihydroxy-3-methylbutanoate = 3-methyl-2-oxobutanoate + H2O. The catalysed reaction is (2R,3R)-2,3-dihydroxy-3-methylpentanoate = (S)-3-methyl-2-oxopentanoate + H2O. The protein operates within amino-acid biosynthesis; L-isoleucine biosynthesis; L-isoleucine from 2-oxobutanoate: step 3/4. It participates in amino-acid biosynthesis; L-valine biosynthesis; L-valine from pyruvate: step 3/4. Its function is as follows. Functions in the biosynthesis of branched-chain amino acids. Catalyzes the dehydration of (2R,3R)-2,3-dihydroxy-3-methylpentanoate (2,3-dihydroxy-3-methylvalerate) into 2-oxo-3-methylpentanoate (2-oxo-3-methylvalerate) and of (2R)-2,3-dihydroxy-3-methylbutanoate (2,3-dihydroxyisovalerate) into 2-oxo-3-methylbutanoate (2-oxoisovalerate), the penultimate precursor to L-isoleucine and L-valine, respectively. The protein is Dihydroxy-acid dehydratase of Salmonella schwarzengrund (strain CVM19633).